A 502-amino-acid polypeptide reads, in one-letter code: Transmembrane prolyl 4-hydroxylase (502 aa).

The tract at residues 1–29 (MAAAAVTGQRPETAAAEEASRPQWAPPDH) is disordered. Topologically, residues 1–60 (MAAAAVTGQRPETAAAEEASRPQWAPPDHCQAQAAAGLGDGEDAPVRPLCKPRGICSRAY) are cytoplasmic. Residues 61 to 81 (FLVLMVFVHLYLGNVLALLLF) traverse the membrane as a helical; Signal-anchor for type II membrane protein segment. Over 82 to 502 (VHYSNGDESS…RAYRDARVEL (421 aa)) the chain is Lumenal. Residues 89-111 (ESSDPGPQHRAQGPGPEPTLGPL) are disordered. EF-hand domains are found at residues 185–220 (TMQVSQLDLFRLLDQNRDGHLQLREVLAQTRLGNGW) and 224–259 (PESIQEMYAAIKADPDGDGVLSLQEFSNMDLRDFHK). Residues aspartate 198, asparagine 200, aspartate 202, histidine 204, glutamate 209, aspartate 237, aspartate 239, aspartate 241, and glutamate 248 each coordinate Ca(2+). One can recognise a Fe2OG dioxygenase domain in the interval 310–460 (LSEPLQVVRY…KWIANNWINV (151 aa)). Residues histidine 328 and aspartate 330 each contribute to the Fe cation site. Asparagine 348 and asparagine 368 each carry an N-linked (GlcNAc...) asparagine glycan. Fe cation is bound at residue glutamate 374. Residue asparagine 382 is glycosylated (N-linked (GlcNAc...) asparagine). Residue lysine 451 participates in 2-oxoglutarate binding.

Homodimer. It depends on Fe(2+) as a cofactor. The cofactor is L-ascorbate. Glycosylated. As to expression, widely expressed with highest levels in adult pancreas, heart, skeletal muscle, brain, placenta, kidney and adrenal gland. Expressed at lower levels in epiphyseal cartilage and in fibroblasts.

The protein resides in the endoplasmic reticulum membrane. The catalysed reaction is L-prolyl-[hypoxia-inducible factor alpha subunit] + 2-oxoglutarate + O2 = trans-4-hydroxy-L-prolyl-[hypoxia-inducible factor alpha subunit] + succinate + CO2. In terms of biological role, catalyzes the post-translational formation of 4-hydroxyproline in hypoxia-inducible factor (HIF) alpha proteins. Hydroxylates HIF1A at 'Pro-402' and 'Pro-564'. May function as a cellular oxygen sensor and, under normoxic conditions, may target HIF through the hydroxylation for proteasomal degradation via the von Hippel-Lindau ubiquitination complex. This chain is Transmembrane prolyl 4-hydroxylase (P4HTM), found in Homo sapiens (Human).